Consider the following 149-residue polypeptide: MKIVVDADACPVKGIIERLAKEHQIEVIMFIDTSHELYSDYSKIITVSKAPDAVDFALLNQTSPNDIVVTQDYGVAAMALGKKAKALHPSGKIFTNDNINQMLFERHIAKEQRRHGKQNLHSKNNKKRTTGDDIHFESSLNELLKSISS.

The span at Gln112–Arg128 shows a compositional bias: basic residues. Residues Gln112 to Asp132 form a disordered region.

Belongs to the UPF0178 family.

The sequence is that of UPF0178 protein Cphy_3042 from Lachnoclostridium phytofermentans (strain ATCC 700394 / DSM 18823 / ISDg) (Clostridium phytofermentans).